Reading from the N-terminus, the 234-residue chain is Purine nucleoside phosphorylase DeoD-type (234 aa).

An a purine D-ribonucleoside-binding site is contributed by His4. Phosphate is bound by residues Gly20, Arg24, Arg43, and 87–90; that span reads RIGT. Residues 179–181 and 203–204 contribute to the a purine D-ribonucleoside site; these read EME and SD. Catalysis depends on Asp204, which acts as the Proton donor.

This sequence belongs to the PNP/UDP phosphorylase family. In terms of assembly, homohexamer; trimer of homodimers.

The enzyme catalyses a purine D-ribonucleoside + phosphate = a purine nucleobase + alpha-D-ribose 1-phosphate. The catalysed reaction is a purine 2'-deoxy-D-ribonucleoside + phosphate = a purine nucleobase + 2-deoxy-alpha-D-ribose 1-phosphate. In terms of biological role, catalyzes the reversible phosphorolytic breakdown of the N-glycosidic bond in the beta-(deoxy)ribonucleoside molecules, with the formation of the corresponding free purine bases and pentose-1-phosphate. In Helicobacter pylori (strain Shi470), this protein is Purine nucleoside phosphorylase DeoD-type.